The following is a 193-amino-acid chain: Major structural subunit of bundle-forming pilus (193 aa).

Positions 1-13 (MVSKIMNKKYEKG) are cleaved as a propeptide — leader sequence. Leucine 14 carries the post-translational modification N-methylleucine. Residues 14–35 (LSLIESAMVLALAATVTAGVMF) form a helical membrane-spanning segment. A disulfide bridge links cysteine 129 with cysteine 179.

Belongs to the N-Me-Phe pilin family. 10 to 100 laterally aligned filaments or bundle-forming pili coalesce into rope-like bundles. These form linkages between the bacteria within the enteropathogenic E.coli (EPEC) microcolonies that are attached to epithelial cells.

It localises to the fimbrium. It is found in the membrane. In terms of biological role, major component of type IV bundle-forming pili (BFP) that plays a role in adherence to host cells and virulence. The sequence is that of Major structural subunit of bundle-forming pilus (bfpA) from Escherichia coli O127:H6 (strain E2348/69 / EPEC).